A 228-amino-acid chain; its full sequence is UPF0173 metal-dependent hydrolase Smar_0891 (228 aa).

The protein belongs to the UPF0173 family.

This is UPF0173 metal-dependent hydrolase Smar_0891 from Staphylothermus marinus (strain ATCC 43588 / DSM 3639 / JCM 9404 / F1).